The chain runs to 155 residues: 6,7-dimethyl-8-ribityllumazine synthase (155 aa).

Residues Phe23, 57-59 (AFE), and 81-83 (AVI) contribute to the 5-amino-6-(D-ribitylamino)uracil site. 86 to 87 (ST) provides a ligand contact to (2S)-2-hydroxy-3-oxobutyl phosphate. His89 serves as the catalytic Proton donor. 5-amino-6-(D-ribitylamino)uracil is bound at residue Phe114. Arg128 lines the (2S)-2-hydroxy-3-oxobutyl phosphate pocket.

The protein belongs to the DMRL synthase family.

It catalyses the reaction (2S)-2-hydroxy-3-oxobutyl phosphate + 5-amino-6-(D-ribitylamino)uracil = 6,7-dimethyl-8-(1-D-ribityl)lumazine + phosphate + 2 H2O + H(+). The protein operates within cofactor biosynthesis; riboflavin biosynthesis; riboflavin from 2-hydroxy-3-oxobutyl phosphate and 5-amino-6-(D-ribitylamino)uracil: step 1/2. In terms of biological role, catalyzes the formation of 6,7-dimethyl-8-ribityllumazine by condensation of 5-amino-6-(D-ribitylamino)uracil with 3,4-dihydroxy-2-butanone 4-phosphate. This is the penultimate step in the biosynthesis of riboflavin. The protein is 6,7-dimethyl-8-ribityllumazine synthase of Citrifermentans bemidjiense (strain ATCC BAA-1014 / DSM 16622 / JCM 12645 / Bem) (Geobacter bemidjiensis).